The primary structure comprises 42 residues: Photosystem II reaction center protein J (42 aa).

Residues 10 to 30 (IPLWLIATVAGILVLTVVGIF) form a helical membrane-spanning segment.

It belongs to the PsbJ family. PSII is composed of 1 copy each of membrane proteins PsbA, PsbB, PsbC, PsbD, PsbE, PsbF, PsbH, PsbI, PsbJ, PsbK, PsbL, PsbM, PsbT, PsbX, PsbY, PsbZ, Psb30/Ycf12, at least 3 peripheral proteins of the oxygen-evolving complex and a large number of cofactors. It forms dimeric complexes.

It localises to the plastid. The protein resides in the chloroplast thylakoid membrane. One of the components of the core complex of photosystem II (PSII). PSII is a light-driven water:plastoquinone oxidoreductase that uses light energy to abstract electrons from H(2)O, generating O(2) and a proton gradient subsequently used for ATP formation. It consists of a core antenna complex that captures photons, and an electron transfer chain that converts photonic excitation into a charge separation. In Chara vulgaris (Common stonewort), this protein is Photosystem II reaction center protein J.